The primary structure comprises 332 residues: Phenol 2-monooxygenase, oxygenase component MhpL (332 aa).

Belongs to the TmoE/XamoE family.

The catalysed reaction is phenol + NADH + O2 + H(+) = catechol + NAD(+) + H2O. It participates in aromatic compound metabolism; phenol degradation. In terms of biological role, part of a multicomponent enzyme which catalyzes the degradation of phenol and some of its methylated derivatives. The polypeptide is Phenol 2-monooxygenase, oxygenase component MhpL (mphL) (Acinetobacter pittii (strain PHEA-2)).